The following is a 417-amino-acid chain: Serine hydroxymethyltransferase (417 aa).

Residues Leu-121 and 125–127 contribute to the (6S)-5,6,7,8-tetrahydrofolate site; that span reads GHL. N6-(pyridoxal phosphate)lysine is present on Lys-230. Residue 355-357 coordinates (6S)-5,6,7,8-tetrahydrofolate; sequence SPF.

It belongs to the SHMT family. Homodimer. It depends on pyridoxal 5'-phosphate as a cofactor.

The protein localises to the cytoplasm. The enzyme catalyses (6R)-5,10-methylene-5,6,7,8-tetrahydrofolate + glycine + H2O = (6S)-5,6,7,8-tetrahydrofolate + L-serine. Its pathway is one-carbon metabolism; tetrahydrofolate interconversion. It functions in the pathway amino-acid biosynthesis; glycine biosynthesis; glycine from L-serine: step 1/1. Functionally, catalyzes the reversible interconversion of serine and glycine with tetrahydrofolate (THF) serving as the one-carbon carrier. This reaction serves as the major source of one-carbon groups required for the biosynthesis of purines, thymidylate, methionine, and other important biomolecules. Also exhibits THF-independent aldolase activity toward beta-hydroxyamino acids, producing glycine and aldehydes, via a retro-aldol mechanism. This Marinobacter nauticus (strain ATCC 700491 / DSM 11845 / VT8) (Marinobacter aquaeolei) protein is Serine hydroxymethyltransferase.